Consider the following 197-residue polypeptide: Inner membrane-spanning protein YciB (197 aa).

A run of 5 helical transmembrane segments spans residues 22-42 (IYSA…YHWF), 48-68 (PSMM…TLIF), 76-96 (WKPS…HLIG), 121-141 (AAWV…AYTF), and 144-164 (EIWV…FLIG).

This sequence belongs to the YciB family.

Its subcellular location is the cell inner membrane. Functionally, plays a role in cell envelope biogenesis, maintenance of cell envelope integrity and membrane homeostasis. The sequence is that of Inner membrane-spanning protein YciB from Magnetococcus marinus (strain ATCC BAA-1437 / JCM 17883 / MC-1).